The following is a 76-amino-acid chain: Large ribosomal subunit protein eL38 (76 aa).

Belongs to the eukaryotic ribosomal protein eL38 family.

The sequence is that of Large ribosomal subunit protein eL38 (RpL38) from Lysiphlebus testaceipes (Greenbugs aphid parastoid).